The sequence spans 168 residues: Ribosome maturation factor RimM (168 aa).

The 75-residue stretch at 93 to 167 (ENEFYQSDLV…YITLNMPEFI (75 aa)) folds into the PRC barrel domain.

It belongs to the RimM family. In terms of assembly, binds ribosomal protein uS19.

The protein resides in the cytoplasm. Its function is as follows. An accessory protein needed during the final step in the assembly of 30S ribosomal subunit, possibly for assembly of the head region. Essential for efficient processing of 16S rRNA. May be needed both before and after RbfA during the maturation of 16S rRNA. It has affinity for free ribosomal 30S subunits but not for 70S ribosomes. This is Ribosome maturation factor RimM from Wolbachia sp. subsp. Brugia malayi (strain TRS).